A 459-amino-acid chain; its full sequence is Ribulose bisphosphate carboxylase (459 aa).

Asn111 provides a ligand contact to substrate. Residue Lys166 is the Proton acceptor of the active site. Position 168 (Lys168) interacts with substrate. The Mg(2+) site is built by Lys191, Asp193, and Glu194. N6-carboxylysine is present on Lys191. Catalysis depends on His287, which acts as the Proton acceptor. Substrate-binding residues include Arg288, His321, and Ser368.

It belongs to the RuBisCO large chain family. Type II subfamily. In terms of assembly, homodimer. Mg(2+) serves as cofactor.

It carries out the reaction 2 (2R)-3-phosphoglycerate + 2 H(+) = D-ribulose 1,5-bisphosphate + CO2 + H2O. The catalysed reaction is D-ribulose 1,5-bisphosphate + O2 = 2-phosphoglycolate + (2R)-3-phosphoglycerate + 2 H(+). Its function is as follows. RuBisCO catalyzes two reactions: the carboxylation of D-ribulose 1,5-bisphosphate, the primary event in carbon dioxide fixation, as well as the oxidative fragmentation of the pentose substrate. Both reactions occur simultaneously and in competition at the same active site. This is Ribulose bisphosphate carboxylase from Cereibacter sphaeroides (Rhodobacter sphaeroides).